We begin with the raw amino-acid sequence, 126 residues long: Large ribosomal subunit protein bL20 (126 aa).

Residues Met1–Arg15 are compositionally biased toward basic residues. Residues Met1–Arg20 are disordered.

This sequence belongs to the bacterial ribosomal protein bL20 family.

Its function is as follows. Binds directly to 23S ribosomal RNA and is necessary for the in vitro assembly process of the 50S ribosomal subunit. It is not involved in the protein synthesizing functions of that subunit. The protein is Large ribosomal subunit protein bL20 of Beutenbergia cavernae (strain ATCC BAA-8 / DSM 12333 / CCUG 43141 / JCM 11478 / NBRC 16432 / NCIMB 13614 / HKI 0122).